Reading from the N-terminus, the 839-residue chain is Homeobox-leucine zipper protein HOX10 (839 aa).

2 disordered regions span residues 1–24 (MAAAVAMRGSSSDGGGYDKVSGMD) and 132–157 (QNTPLANDTSCESNVTTPQNPLRDAS). Residues 24–87 (DSGKYVRYTP…NRRCRDKQRK (64 aa)) constitute a DNA-binding region (homeobox). A coiled-coil region spans residues 91–134 (RLQAVNRKLTAMNKLLMEENERLQKQVSQLVHENAHMRQQLQNT). One can recognise an START domain in the interval 155–383 (DASNPSGLLS…IAQETSGEVV (229 aa)).

The protein belongs to the HD-ZIP homeobox family. Class III subfamily. Expressed in stems, leaf sheaths and blades and panicles.

Its subcellular location is the nucleus. Functionally, probable transcription factor. The polypeptide is Homeobox-leucine zipper protein HOX10 (HOX10) (Oryza sativa subsp. japonica (Rice)).